The sequence spans 321 residues: D-alanine--D-alanine ligase (321 aa).

One can recognise an ATP-grasp domain in the interval 121–315; the sequence is RIWFLTNNIN…FTNLIEEIIK (195 aa). 147–199 lines the ATP pocket; sequence PMKRPYVIKPLTQGSSIGVEVIFAEDDFNFADYDFPYGDQVIIEQYIKGRELQ. 3 residues coordinate Mg(2+): Glu-268, Glu-282, and Asn-284.

The protein belongs to the D-alanine--D-alanine ligase family. Mg(2+) serves as cofactor. Mn(2+) is required as a cofactor.

The protein localises to the cytoplasm. The enzyme catalyses 2 D-alanine + ATP = D-alanyl-D-alanine + ADP + phosphate + H(+). It functions in the pathway cell wall biogenesis; peptidoglycan biosynthesis. In terms of biological role, cell wall formation. The polypeptide is D-alanine--D-alanine ligase (Rickettsia africae (strain ESF-5)).